The primary structure comprises 567 residues: Lactase-like protein (567 aa).

The signal sequence occupies residues 1–21 (MKPVWVATLLWMLLLVPRLGA). The Extracellular segment spans residues 23-541 (RKGSPEEASF…LLSHMQMVTE (519 aa)). N-linked (GlcNAc...) asparagine glycans are attached at residues N80, N171, and N245. Residues 542–562 (IVVPTVCSLCVLITAVLLMLL) form a helical membrane-spanning segment. The Cytoplasmic portion of the chain corresponds to 563-567 (LRRQS).

This sequence belongs to the glycosyl hydrolase 1 family. Klotho subfamily. May form dimers.

The protein resides in the endoplasmic reticulum membrane. In terms of biological role, plays a role in formation of the lens suture in the eye, which is important for normal optical properties of the lens. The sequence is that of Lactase-like protein (LCTL) from Homo sapiens (Human).